A 226-amino-acid polypeptide reads, in one-letter code: Lipoprotein-releasing system ATP-binding protein LolD (226 aa).

Positions 5 to 226 (LKATNINKIY…LLRNGHWENY (222 aa)) constitute an ABC transporter domain. 41–48 (GTSGSGKS) is an ATP binding site.

This sequence belongs to the ABC transporter superfamily. Lipoprotein translocase (TC 3.A.1.125) family. As to quaternary structure, the complex is composed of two ATP-binding proteins (LolD) and two transmembrane proteins (LolC and LolE).

The protein localises to the cell inner membrane. Part of the ABC transporter complex LolCDE involved in the translocation of mature outer membrane-directed lipoproteins, from the inner membrane to the periplasmic chaperone, LolA. Responsible for the formation of the LolA-lipoprotein complex in an ATP-dependent manner. In Psychrobacter cryohalolentis (strain ATCC BAA-1226 / DSM 17306 / VKM B-2378 / K5), this protein is Lipoprotein-releasing system ATP-binding protein LolD.